Reading from the N-terminus, the 295-residue chain is Light-independent protochlorophyllide reductase iron-sulfur ATP-binding protein (295 aa).

ATP contacts are provided by residues 10–15 (GIGKST) and Lys39. Ser14 contacts Mg(2+). Positions 95 and 129 each coordinate [4Fe-4S] cluster. 180–181 (NR) contacts ATP. Basic and acidic residues predominate over residues 275–289 (TKDKKENKKEDKENS). Residues 275 to 295 (TKDKKENKKEDKENSADFTWL) form a disordered region.

Belongs to the NifH/BchL/ChlL family. In terms of assembly, homodimer. Protochlorophyllide reductase is composed of three subunits; ChlL, ChlN and ChlB. [4Fe-4S] cluster is required as a cofactor.

Its subcellular location is the plastid. It is found in the chloroplast. It carries out the reaction chlorophyllide a + oxidized 2[4Fe-4S]-[ferredoxin] + 2 ADP + 2 phosphate = protochlorophyllide a + reduced 2[4Fe-4S]-[ferredoxin] + 2 ATP + 2 H2O. It participates in porphyrin-containing compound metabolism; chlorophyll biosynthesis (light-independent). Its function is as follows. Component of the dark-operative protochlorophyllide reductase (DPOR) that uses Mg-ATP and reduced ferredoxin to reduce ring D of protochlorophyllide (Pchlide) to form chlorophyllide a (Chlide). This reaction is light-independent. The L component serves as a unique electron donor to the NB-component of the complex, and binds Mg-ATP. This is Light-independent protochlorophyllide reductase iron-sulfur ATP-binding protein from Physcomitrium patens (Spreading-leaved earth moss).